Here is a 650-residue protein sequence, read N- to C-terminus: Pentatricopeptide repeat-containing protein At1g51965, mitochondrial (650 aa).

Residues 1 to 23 (MKLLRRRFFNSVNTITRPNRRHY) constitute a mitochondrion transit peptide. 14 PPR repeats span residues 132 to 169 (DPFL…NVHG), 170 to 200 (NIST…WDLK), 202 to 236 (NSFT…GHKL), 237 to 267 (DIFA…RHCR), 269 to 303 (DEYT…GLTL), 304 to 338 (NVVG…GCRP), 339 to 369 (NEYT…SKRY), 371 to 405 (TQGI…PVKG), 406 to 440 (ERDS…GVVT), 441 to 475 (DTMM…GPSP), 476 to 510 (DIFT…DCKP), 511 to 545 (DIIS…GLNP), 546 to 580 (DVVT…GCQP), and 581 to 615 (NIVT…GLTP).

It belongs to the PPR family. P subfamily.

The protein resides in the mitochondrion. The polypeptide is Pentatricopeptide repeat-containing protein At1g51965, mitochondrial (Arabidopsis thaliana (Mouse-ear cress)).